Consider the following 505-residue polypeptide: N-succinylglutamate 5-semialdehyde dehydrogenase (505 aa).

234–239 provides a ligand contact to NAD(+); that stretch reads GSAHTG. Active-site residues include E257 and C291.

The protein belongs to the aldehyde dehydrogenase family. AstD subfamily.

It carries out the reaction N-succinyl-L-glutamate 5-semialdehyde + NAD(+) + H2O = N-succinyl-L-glutamate + NADH + 2 H(+). It participates in amino-acid degradation; L-arginine degradation via AST pathway; L-glutamate and succinate from L-arginine: step 4/5. Its function is as follows. Catalyzes the NAD-dependent reduction of succinylglutamate semialdehyde into succinylglutamate. This is N-succinylglutamate 5-semialdehyde dehydrogenase from Yersinia pestis bv. Antiqua (strain Antiqua).